The following is a 255-amino-acid chain: Uridylate kinase (255 aa).

The segment at 1 to 21 (MSAAAAGRGERLNHAGNPGHR) is disordered. 30–33 (KLGG) lines the ATP pocket. Gly71 provides a ligand contact to UMP. The ATP site is built by Gly72 and Arg76. Residues Asp91 and 152–159 (MGLPYFST) each bind UMP. ATP-binding residues include Phe185 and Asp188.

This sequence belongs to the UMP kinase family. As to quaternary structure, homohexamer.

It localises to the cytoplasm. The catalysed reaction is UMP + ATP = UDP + ADP. It functions in the pathway pyrimidine metabolism; CTP biosynthesis via de novo pathway; UDP from UMP (UMPK route): step 1/1. Its activity is regulated as follows. Inhibited by UTP. Its function is as follows. Catalyzes the reversible phosphorylation of UMP to UDP. This is Uridylate kinase from Mycobacterium leprae (strain TN).